The primary structure comprises 368 residues: Terpene cyclase penA (368 aa).

Helical transmembrane passes span 10–30 (IILA…NGFI), 81–101 (LSLY…ILLM), 118–138 (LTGL…LLAM), 192–212 (LFIA…GIAH), 233–253 (FALA…FLSI), and 334–354 (LATM…YWTA).

This sequence belongs to the membrane-bound ascI terpene cyclase family.

Its subcellular location is the membrane. The protein operates within secondary metabolite biosynthesis. In terms of biological role, part of the gene cluster that mediates the biosynthesis of the indole diterpenes penitrems. The geranylgeranyl diphosphate (GGPP) synthase penG catalyzes the first step in penitrem biosynthesis via conversion of farnesyl pyrophosphate and isopentyl pyrophosphate into geranylgeranyl pyrophosphate (GGPP). Condensation of indole-3-glycerol phosphate with GGPP by the prenyl transferase penC then forms 3-geranylgeranylindole (3-GGI). Epoxidation by the FAD-dependent monooxygenase penM leads to a epoxidized-GGI that is substrate of the terpene cyclase penB for cyclization to yield paspaline. Paspaline is subsequently converted to 13-desoxypaxilline by the cytochrome P450 monooxygenase penP, the latter being then converted to paxilline by the cytochrome P450 monooxygenase penQ. Paxilline is converted to beta-paxitriol via C-10 ketoreduction by the short-chain dehydrogenase PC-15 which can be monoprenylated at the C-20 by the indole diterpene prenyltransferase penD. A two-step elimination (acetylation and elimination) process performed by the O-acetyltransferase PC-16 and the P.simplicissimum ptmI-ortholog not yet identified in P.crustosum, leads to the production of the prenylated form of penijanthine. The FAD-linked oxidoreductase ptmO then converts the prenylated form of penijanthine into PC-M5 which is in turn transformed into PC-M4 by the aromatic dimethylallyltransferase PC-22. A series of oxidation steps involving 4 cytochrome P450 monooxygenases (PC-21, PC-05, PC-23, PC-20) and a FAD-dependent monooxygenase (PC-14) are required for the transformation of PC-M4 to penitrems A and E. Synthesis of these final products is proposed to proceed via penitrems D and C (PC-21, PC-05, PC-14) and penitrems B and F (PC-21, PC-05, PC-14, PC-23). This chain is Terpene cyclase penA, found in Penicillium crustosum (Blue mold fungus).